The chain runs to 593 residues: Solute carrier family 40 member 3, chloroplastic (593 aa).

The disordered stretch occupies residues 1-23; that stretch reads MSMSKLLSPPPTSPPGPALSRLP. The transit peptide at 1-51 directs the protein to the chloroplast; the sequence is MSMSKLLSPPPTSPPGPALSRLPCRRVAPPPVLPFPFPLRRLTSRRVFATS. The span at 8–17 shows a compositional bias: pro residues; the sequence is SPPPTSPPGP. 11 consecutive transmembrane segments (helical) span residues 181 to 201, 219 to 239, 253 to 273, 303 to 322, 323 to 343, 403 to 423, 431 to 451, 462 to 482, 493 to 513, 530 to 550, and 557 to 577; these read ILPVAVLGFFTKLVVFAAGPL, AAIQTAAHLVSVATITYAFAV, FAVLVASTAVDRLACVALGII, LLCETVGASIFALLLSKNNP, LTCIKLSCVISLCALPLLIFL, YVFVCFNVALAPGALMTTFLI, VIGAFGGSSGAVGILATFATA, AGAAGLIAQSALLGAAVVVYL, LFAFLGLIVASRAGHMAYSAI, IGATEIAVASLAELAMMAVAV, and HFGALAALSATAVTAAAGMYC.

This sequence belongs to the ferroportin (FP) (TC 2.A.100) family. SLC40A subfamily.

The protein localises to the membrane. It is found in the plastid. The protein resides in the chloroplast envelope. In terms of biological role, may be involved in iron transport and iron homeostasis. The sequence is that of Solute carrier family 40 member 3, chloroplastic from Oryza sativa subsp. japonica (Rice).